A 427-amino-acid polypeptide reads, in one-letter code: Glutamate-1-semialdehyde 2,1-aminomutase (427 aa).

K267 carries the N6-(pyridoxal phosphate)lysine modification.

It belongs to the class-III pyridoxal-phosphate-dependent aminotransferase family. HemL subfamily. Homodimer. Pyridoxal 5'-phosphate is required as a cofactor.

Its subcellular location is the cytoplasm. The enzyme catalyses (S)-4-amino-5-oxopentanoate = 5-aminolevulinate. It participates in porphyrin-containing compound metabolism; protoporphyrin-IX biosynthesis; 5-aminolevulinate from L-glutamyl-tRNA(Glu): step 2/2. This chain is Glutamate-1-semialdehyde 2,1-aminomutase, found in Thermodesulfovibrio yellowstonii (strain ATCC 51303 / DSM 11347 / YP87).